We begin with the raw amino-acid sequence, 887 residues long: Exocyst complex component SEC3A (887 aa).

Coiled-coil stretches lie at residues Ile221–Glu248 and Leu281–Gln301. A disordered region spans residues Gly542–Leu581. Residues Asp555 to Glu569 are compositionally biased toward acidic residues.

The protein belongs to the SEC3 family. In terms of assembly, the exocyst complex is composed of SEC3, SEC5, SEC6, SEC8, SEC10, EXO70A1 and EXO84B. Interacts with EXO70A1, SEC5A and ICR1, but not with ICR2. Binds to EXO70H1. Binds directly to B1L. As to expression, widely expressed. Preferentially expressed in tissues containing dividing and expanding cells, such as the shoot apical meristem, root tip, lateral root primordia and developing embryos.

The protein resides in the cytoplasm. The protein localises to the cytosol. It is found in the cell membrane. Its subcellular location is the cytoskeleton. It localises to the phragmoplast. The protein resides in the secreted. The protein localises to the extracellular exosome. In terms of biological role, component of the exocyst complex involved in the docking of exocytic vesicles with fusion sites on the plasma membrane during regulated or polarized secretion. Involved in polarized cell growth and organ morphogenesis. During cytokinesis, involved in cell plate initiation, cell plate maturation and formation of new primary cell wall. During cytokinesis, involved in cell plate initiation, cell plate maturation and formation of new primary cell wall. This Arabidopsis thaliana (Mouse-ear cress) protein is Exocyst complex component SEC3A.